A 102-amino-acid polypeptide reads, in one-letter code: MSELSATHFLLLSAALFIIGMVGVLTRRNVLVIFMCIELMLNAVNVSLIGFAWELHQLTGQVFALFVIAIAAAEAVVGLGIVMALTRRTDTVDIDELRQLRE.

3 helical membrane passes run 6 to 26 (ATHF…GVLT), 31 to 51 (LVIF…LIGF), and 62 to 82 (VFAL…LGIV).

This sequence belongs to the complex I subunit 4L family. In terms of assembly, NDH-1 is composed of 14 different subunits. Subunits NuoA, H, J, K, L, M, N constitute the membrane sector of the complex.

It localises to the cell membrane. It catalyses the reaction a quinone + NADH + 5 H(+)(in) = a quinol + NAD(+) + 4 H(+)(out). In terms of biological role, NDH-1 shuttles electrons from NADH, via FMN and iron-sulfur (Fe-S) centers, to quinones in the respiratory chain. The immediate electron acceptor for the enzyme in this species is believed to be ubiquinone. Couples the redox reaction to proton translocation (for every two electrons transferred, four hydrogen ions are translocated across the cytoplasmic membrane), and thus conserves the redox energy in a proton gradient. This Thermomicrobium roseum (strain ATCC 27502 / DSM 5159 / P-2) protein is NADH-quinone oxidoreductase subunit K.